Here is a 313-residue protein sequence, read N- to C-terminus: Olfactory receptor 8C8 (313 aa).

At 1-27 the chain is on the extracellular side; the sequence is MMQITMENKSSVSEFILMGLTDQPELQ. The N-linked (GlcNAc...) asparagine glycan is linked to Asn-8. The chain crosses the membrane as a helical span at residues 28-48; the sequence is LPLFVLFLMNYTATVMGNLTL. Residues 49 to 59 lie on the Cytoplasmic side of the membrane; the sequence is MNLICLNSNLH. A helical transmembrane segment spans residues 60–80; sequence TPMYFFLFNLSFIDFCYSMVF. Residues 81–96 are Extracellular-facing; sequence TPKMLMSFILEKNTIS. Residues 97-117 traverse the membrane as a helical segment; the sequence is FGGCMAQLFFFLFFVNSESYV. An intrachain disulfide couples Cys-100 to Cys-192. Residues 118–136 lie on the Cytoplasmic side of the membrane; the sequence is LTAMAYDRYVAICKPLTYK. A helical transmembrane segment spans residues 137-157; that stretch reads VIMSPKICCLLIFSSYLMGFA. The Extracellular portion of the chain corresponds to 158–208; the sequence is SAMAHTGCMIRLSFCDSNIINHYMCDIFPLLPLSCSSTYVNELMSSVVVGS. Residues 209–229 traverse the membrane as a helical segment; it reads AIILCCLIILISYAMILFNII. Residues 230 to 239 lie on the Cytoplasmic side of the membrane; it reads HMSSGKGWSK. A helical membrane pass occupies residues 240 to 260; sequence ALGTCGSHIITVSLFYGSGLL. Residues 261 to 274 are Extracellular-facing; the sequence is AYVKPSSAKTVGQG. Residues 275–295 traverse the membrane as a helical segment; the sequence is KFFSVFYTLLVPMLNPLIYSL. Over 296-313 the chain is Cytoplasmic; the sequence is RNKDVKLAVKKTWKRITS.

The protein belongs to the G-protein coupled receptor 1 family. Expressed in neurons in the olfactory epithelium.

It is found in the cell membrane. In terms of biological role, potential odorant receptor. The chain is Olfactory receptor 8C8 from Mus musculus (Mouse).